The primary structure comprises 339 residues: DNA-directed RNA polymerase subunit alpha (339 aa).

Residues methionine 1–glutamate 235 form an alpha N-terminal domain (alpha-NTD) region. Residues phenylalanine 251–tyrosine 339 are alpha C-terminal domain (alpha-CTD).

Belongs to the RNA polymerase alpha chain family. As to quaternary structure, homodimer. The RNAP catalytic core consists of 2 alpha, 1 beta, 1 beta' and 1 omega subunit. When a sigma factor is associated with the core the holoenzyme is formed, which can initiate transcription.

It carries out the reaction RNA(n) + a ribonucleoside 5'-triphosphate = RNA(n+1) + diphosphate. DNA-dependent RNA polymerase catalyzes the transcription of DNA into RNA using the four ribonucleoside triphosphates as substrates. In Methylobacterium nodulans (strain LMG 21967 / CNCM I-2342 / ORS 2060), this protein is DNA-directed RNA polymerase subunit alpha.